The primary structure comprises 272 residues: R3H domain-containing protein 4 (272 aa).

Residues 141–167 (LEDEGKSKARRRGPTRGEDRRREDPAY) form a disordered region. Over residues 155-165 (TRGEDRRREDP) the composition is skewed to basic and acidic residues. The region spanning 191-254 (METLETWEER…KRQMKVSNRH (64 aa)) is the R3H domain.

It is found in the nucleus. The protein is R3H domain-containing protein 4 (R3HDM4) of Bos taurus (Bovine).